A 317-amino-acid chain; its full sequence is MARRSRGRFIDGIVLLDKDTGMSSNFALQRVKRLFNANKAGHTGALDPLATGMLPICLGEATKFSQHLLDADKRYTVTAKLGERTDTSDSDGEVVQTRPINFTQELLMESLEHFRGETMQVPSMYSALKHEGQPLYKYAREGIEVPRKARPINVFELNFISLEGDELTLDIHCSKGTYIRTITDDLGEMLGCGAHVIMLRRTQVAGYPYERMVSLEQLNEMVSQAEADGVEAKSVLDPLLLPMDTAVSKFREINLAESQAPYLMNGNPVHASGLVADEIVRITIGEEHKFVGIGAMNDDGMLAPKRLIVIREDEVKA.

D47 acts as the Nucleophile in catalysis.

The protein belongs to the pseudouridine synthase TruB family. Type 1 subfamily.

The enzyme catalyses uridine(55) in tRNA = pseudouridine(55) in tRNA. Its function is as follows. Responsible for synthesis of pseudouridine from uracil-55 in the psi GC loop of transfer RNAs. The sequence is that of tRNA pseudouridine synthase B from Shewanella woodyi (strain ATCC 51908 / MS32).